Reading from the N-terminus, the 475-residue chain is Ribulose bisphosphate carboxylase large chain (475 aa).

The propeptide occupies 1 to 2 (MS). The residue at position 3 (proline 3) is an N-acetylproline. Lysine 14 carries the post-translational modification N6,N6,N6-trimethyllysine. Residues asparagine 123 and threonine 173 each coordinate substrate. Lysine 175 serves as the catalytic Proton acceptor. Residue lysine 177 participates in substrate binding. Mg(2+) contacts are provided by lysine 201, aspartate 203, and glutamate 204. An N6-carboxylysine modification is found at lysine 201. Histidine 294 functions as the Proton acceptor in the catalytic mechanism. 3 residues coordinate substrate: arginine 295, histidine 327, and serine 379.

Belongs to the RuBisCO large chain family. Type I subfamily. Heterohexadecamer of 8 large chains and 8 small chains; disulfide-linked. The disulfide link is formed within the large subunit homodimers. The cofactor is Mg(2+). In terms of processing, the disulfide bond which can form in the large chain dimeric partners within the hexadecamer appears to be associated with oxidative stress and protein turnover.

It is found in the plastid. It localises to the chloroplast. The enzyme catalyses 2 (2R)-3-phosphoglycerate + 2 H(+) = D-ribulose 1,5-bisphosphate + CO2 + H2O. The catalysed reaction is D-ribulose 1,5-bisphosphate + O2 = 2-phosphoglycolate + (2R)-3-phosphoglycerate + 2 H(+). In terms of biological role, ruBisCO catalyzes two reactions: the carboxylation of D-ribulose 1,5-bisphosphate, the primary event in carbon dioxide fixation, as well as the oxidative fragmentation of the pentose substrate in the photorespiration process. Both reactions occur simultaneously and in competition at the same active site. The sequence is that of Ribulose bisphosphate carboxylase large chain from Notothixos subaureus (Golden mistletoe).